Reading from the N-terminus, the 363-residue chain is UDP-N-acetylglucosamine--N-acetylmuramyl-(pentapeptide) pyrophosphoryl-undecaprenol N-acetylglucosamine transferase (363 aa).

Residues 10-12 (TGG), N124, S195, I249, and Q294 contribute to the UDP-N-acetyl-alpha-D-glucosamine site.

Belongs to the glycosyltransferase 28 family. MurG subfamily.

The protein resides in the cell membrane. It catalyses the reaction Mur2Ac(oyl-L-Ala-gamma-D-Glu-L-Lys-D-Ala-D-Ala)-di-trans,octa-cis-undecaprenyl diphosphate + UDP-N-acetyl-alpha-D-glucosamine = beta-D-GlcNAc-(1-&gt;4)-Mur2Ac(oyl-L-Ala-gamma-D-Glu-L-Lys-D-Ala-D-Ala)-di-trans,octa-cis-undecaprenyl diphosphate + UDP + H(+). Its pathway is cell wall biogenesis; peptidoglycan biosynthesis. Cell wall formation. Catalyzes the transfer of a GlcNAc subunit on undecaprenyl-pyrophosphoryl-MurNAc-pentapeptide (lipid intermediate I) to form undecaprenyl-pyrophosphoryl-MurNAc-(pentapeptide)GlcNAc (lipid intermediate II). This Leuconostoc mesenteroides subsp. mesenteroides (strain ATCC 8293 / DSM 20343 / BCRC 11652 / CCM 1803 / JCM 6124 / NCDO 523 / NBRC 100496 / NCIMB 8023 / NCTC 12954 / NRRL B-1118 / 37Y) protein is UDP-N-acetylglucosamine--N-acetylmuramyl-(pentapeptide) pyrophosphoryl-undecaprenol N-acetylglucosamine transferase.